Here is a 3010-residue protein sequence, read N- to C-terminus: Genome polyprotein (3010 aa).

An N-acetylserine; by host modification is found at serine 2. The segment at 2 to 23 (STNPKPQRKTKRNTNRRPQDVK) is interaction with STAT1. Residues 2–58 (STNPKPQRKTKRNTNRRPQDVKFPGGGQIVGGVYLLPRRGPRLGVRATRKTSERSQP) are interaction with EIF2AK2/PKR. The segment at 2–59 (STNPKPQRKTKRNTNRRPQDVKFPGGGQIVGGVYLLPRRGPRLGVRATRKTSERSQPR) is interaction with DDX3X. The tract at residues 2 to 75 (STNPKPQRKT…PKARQPEGRA (74 aa)) is disordered. At 2–168 (STNPKPQRKT…EDGVNYATGN (167 aa)) the chain is on the cytoplasmic side. 2 consecutive short sequence motifs (nuclear localization signal) follow at residues 5 to 13 (PKPQRKTKR) and 38 to 43 (PRRGPR). Basic residues predominate over residues 7–16 (PQRKTKRNTN). Over residues 32 to 47 (GGVYLLPRRGPRLGVR) the composition is skewed to low complexity. Serine 53 carries the post-translational modification Phosphoserine; by host. 2 consecutive short sequence motifs (nuclear localization signal) follow at residues 58–64 (PRGRRQP) and 66–71 (PKARQP). Serine 99 is subject to Phosphoserine; by host. Residues 112 to 152 (PRRRSRNLGKVIDTLTCGFADLMGYIPLVGAPLGGAARALA) are important for endoplasmic reticulum and mitochondrial localization. Residue serine 116 is modified to Phosphoserine; by host PKA. Positions 122-173 (VIDTLTCGFADLMGYIPLVGAPLGGAARALAHGVRVLEDGVNYATGNLPGCS) are interaction with APOA2. The important for lipid droplets localization stretch occupies residues 164–167 (YATG). The helical transmembrane segment at 169 to 189 (LPGCSFSIFLLALLSCLTIPA) threads the bilayer. The propeptide at 178-191 (LLALLSCLTIPASA) is ER anchor for the core protein, removed in mature form by host signal peptidase. Topologically, residues 190 to 358 (SAYEVRNVSG…AGAHWGVLAG (169 aa)) are lumenal. 4 N-linked (GlcNAc...) asparagine; by host glycosylation sites follow: asparagine 196, asparagine 209, asparagine 234, and asparagine 250. The tract at residues 265-296 (LVGAAALCSAMYVGDLCGSVFLVAQLFTFSPR) is important for fusion. The N-linked (GlcNAc...) asparagine; by host glycan is linked to asparagine 305. The chain crosses the membrane as a helical span at residues 359–379 (LAYYSMVGNWAKVLIVMLLFA). Residues 380–725 (GVDGGTYVTG…WEYVLLLFLL (346 aa)) lie on the Lumenal side of the membrane. The tract at residues 385–411 (TYVTGGTMAKNTLGITSLFSPGSSQKI) is HVR1. Asparagine 417 carries an N-linked (GlcNAc...) asparagine; by host glycan. N-linked (GlcNAc...) (high mannose) asparagine; by host glycans are attached at residues asparagine 423, asparagine 430, and asparagine 448. Cystine bridges form between cysteine 429–cysteine 552, cysteine 452–cysteine 459, cysteine 486–cysteine 494, and cysteine 503–cysteine 508. The segment at 474–482 (YNESHSSDQ) is HVR2. The CD81-binding 1 stretch occupies residues 480–493 (SDQRPYCWHYAPRP). A glycan (N-linked (GlcNAc...) (high mannose) asparagine; by host) is linked at asparagine 532. The interval 544-551 (PPQGNWFG) is CD81-binding 2. Asparagine 556 is a glycosylation site (N-linked (GlcNAc...) (high mannose) asparagine; by host). An intrachain disulfide couples cysteine 564 to cysteine 569. Residue asparagine 576 is glycosylated (N-linked (GlcNAc...) (high mannose) asparagine; by host). 3 cysteine pairs are disulfide-bonded: cysteine 581–cysteine 585, cysteine 597–cysteine 620, and cysteine 607–cysteine 644. N-linked (GlcNAc...) (high mannose) asparagine; by host glycosylation is found at asparagine 623 and asparagine 645. Cysteine 652 and cysteine 677 are disulfide-bonded. Residues 660–671 (SELSPLLLSTTE) are EIF2AK2/eIF2-alpha phosphorylation homology domain (PePHD). The chain crosses the membrane as a helical span at residues 726-746 (LADARVCACLWMMLLIAQAEA). The Lumenal segment spans residues 747–757 (ALENLVVLNAA). A helical transmembrane segment spans residues 758–778 (SVAGAHGILSFLVFFCAAWYI). The Cytoplasmic portion of the chain corresponds to 779–781 (KGR). The helical transmembrane segment at 782-803 (LVPGAAYALYGVWPLLLLLLAL) threads the bilayer. At 804 to 813 (PPRAYAMDRE) the chain is on the lumenal side. Residues 814 to 834 (MAASCGGAVFVGLILLTLSPH) traverse the membrane as a helical segment. The Cytoplasmic segment spans residues 835-838 (YKLF). Residues 839–859 (LARLIWWLQYFITRAEAHLQV) form a helical membrane-spanning segment. Over 860-881 (WIPPLNVRGGRDAVILLTCAIH) the chain is Lumenal. Residues 882–902 (PELIFTITKILLAILGPLMVL) traverse the membrane as a helical segment. A Peptidase C18 domain is found at 903–1026 (QAGITKVPYF…SLEGQGWRLL (124 aa)). The Cytoplasmic segment spans residues 903–1657 (QAGITKVPYF…CMSADLEVVT (755 aa)). The segment at 904–1206 (AGITKVPYFV…PVESMETTMR (303 aa)) is protease NS2-3. Cysteine 922 is lipidated: S-palmitoyl cysteine; by host. Residues 929 to 949 (AGGHYVQMALMKLAALTGTYV) are interaction with host SCPS1. Residues histidine 952, glutamate 972, and cysteine 993 each act as for protease NS2 activity; shared with dimeric partner in the active site. In terms of domain architecture, Peptidase S29 spans 1027–1208 (APITAYSQQT…ESMETTMRSP (182 aa)). Catalysis depends on charge relay system; for serine protease NS3 activity residues histidine 1083 and aspartate 1107. Residues cysteine 1123 and cysteine 1125 each coordinate Zn(2+). The Charge relay system; for serine protease NS3 activity role is filled by serine 1165. Positions 1171 and 1175 each coordinate Zn(2+). The region spanning 1217–1369 (PAVPQTFQVA…PNIEEVALSS (153 aa)) is the Helicase ATP-binding domain. Residue 1230–1237 (APTGSGKS) participates in ATP binding. Mg(2+)-binding residues include serine 1237 and glutamate 1317. The short motif at 1316-1319 (DECH) is the DECH box element. Positions 1486 to 1497 (QRRGRTGRGRMG) are RNA-binding. Residues 1658–1678 (STWVLVGGVLAALAAYCLTTG) traverse the membrane as a helical segment. The tract at residues 1679 to 1690 (SVVIVGRIILSG) is NS3-binding. The Cytoplasmic segment spans residues 1679-1805 (SVVIVGRIIL…SITSPLTTQH (127 aa)). The helical transmembrane segment at 1806–1826 (TLLFNILGGWVAAQLAPPSAA) threads the bilayer. Over 1827-1828 (SA) the chain is Lumenal. A helical transmembrane segment spans residues 1829-1849 (FVGAGIAGAAVGSIGLGKVLV). The glycine zipper stretch occupies residues 1833 to 1861 (GIAGAAVGSIGLGKVLVDILAGYGAGVAG). Residue aspartate 1850 is a topological domain, cytoplasmic. The chain crosses the membrane as a helical span at residues 1851–1871 (ILAGYGAGVAGALVAFKVMSG). Residues 1872–1881 (EMPSTEDLVN) lie on the Lumenal side of the membrane. A helical membrane pass occupies residues 1882–1902 (LLPAILSPGALVVGVVCAAIL). Residues 1903–1972 (RRHVGPGEGA…WINEDCSTPC (70 aa)) lie on the Cytoplasmic side of the membrane. Residues cysteine 1968 and cysteine 1972 are each lipidated (S-palmitoyl cysteine; by host). An intramembrane segment occupies 1973–2003 (SGSWLRDVWDWICTVLTDFKTWLQSKLLPRL). A membrane-binding region spans residues 1978–1998 (RDVWDWICTVLTDFKTWLQSK). At 2004-2989 (PGVPFFSCQR…YHSLSRARPR (986 aa)) the chain is on the cytoplasmic side. The interval 2005-2221 (GVPFFSCQRG…KATCTTRHDS (217 aa)) is RNA-binding. Residues cysteine 2011, cysteine 2029, cysteine 2031, and cysteine 2052 each coordinate Zn(2+). An FKBP8-binding region spans residues 2120-2208 (EFFTEVDGVR…ASSSASQLSA (89 aa)). Residues 2120–2332 (EFFTEVDGVR…PIPPPRRKRT (213 aa)) are transcriptional activation. The tract at residues 2135 to 2139 (PACKP) is interaction with non-structural protein 4A. The segment at 2187–2219 (KRRLARGSPPSLASSSASQLSAPSLKATCTTRH) is disordered. Residues 2189 to 2441 (RLARGSPPSL…PCAAEETKLP (253 aa)) form an interaction with host SKP2 region. Residue serine 2194 is modified to Phosphoserine; by host; in p56. Over residues 2194-2211 (SPPSLASSSASQLSAPSL) the composition is skewed to low complexity. Position 2197 is a phosphoserine; by host; in p58 (serine 2197). Serine 2201 is subject to Phosphoserine; by host; in p56 and p58, regulates intracellular NS5A distribution. Residues serine 2204, serine 2207, and serine 2210 each carry the phosphoserine; by host; in p58 modification. ISDR stretches follow at residues 2206–2245 (LSAP…TRVE) and 2210–2249 (SLKA…SENK). Residues 2210–2275 (SLKATCTTRH…REVSVPAEIL (66 aa)) form an EIF2AK2/PKR-binding region. The interval 2249-2306 (KVVILDSFEPLQAEEDEREVSVPAEILRRSRKFPRAMPIWARPDYNPPLLESWKDPDY) is NS4B-binding. The SH3-binding signature appears at 2322–2325 (PPIP). A Nuclear localization signal motif is present at residues 2326–2334 (PPRRKRTVV). The interval 2332-2441 (TVVLSESTVS…PCAAEETKLP (110 aa)) is interaction with host IFI27. Lysine 2350 is covalently cross-linked (Glycyl lysine isopeptide (Lys-Gly) (interchain with G-Cter in ubiquitin)). A compositionally biased stretch (polar residues) spans 2351–2371 (TFGSSESSAVDSGTATASPDQ). Residues 2351 to 2407 (TFGSSESSAVDSGTATASPDQPSDDGDAGSDVESYSSMPPLEGEPGDPDLSDGSWST) are disordered. Positions 2354–2377 (SSESSAVDSGTATASPDQPSDDGD) are V3. A phosphoserine; by host mark is found at serine 2448 and serine 2461. Positions 2633–2751 (PMGFAYDTRC…ICESAGTQED (119 aa)) constitute a RdRp catalytic domain. Mg(2+) is bound by residues aspartate 2639, aspartate 2737, and aspartate 2738. A helical transmembrane segment spans residues 2990 to 3010 (WFMWCLLLLSVGVGIYLLPNR).

Belongs to the hepacivirus polyprotein family. Homooligomer. Interacts with E1 (via C-terminus). Interacts with the non-structural protein 5A. Interacts (via N-terminus) with host STAT1 (via SH2 domain); this interaction results in decreased STAT1 phosphorylation and ubiquitin-mediated proteasome-dependent STAT1 degradation, leading to decreased IFN-stimulated gene transcription. Interacts with host STAT3; this interaction constitutively activates STAT3. Interacts with host LTBR receptor. Interacts with host TNFRSF1A receptor and possibly induces apoptosis. Interacts with host HNRPK. Interacts with host YWHAE. Interacts with host UBE3A/E6AP. Interacts with host DDX3X. Interacts with host APOA2. Interacts with host RXRA protein. Interacts with host SP110 isoform 3/Sp110b; this interaction sequesters the transcriptional corepressor SP110 away from the nucleus. Interacts with host CREB3 nuclear transcription protein; this interaction triggers cell transformation. Interacts with host ACY3. Interacts with host C1QR1. Interacts with host RBM24; this interaction, which enhances the interaction of the mature core protein with 5'-UTR, may inhibit viral translation and favor replication. Interacts with host EIF2AK2/PKR; this interaction induces the autophosphorylation of EIF2AK2. Part of the viral assembly initiation complex composed of NS2, E1, E2, NS3, NS4A, NS5A and the mature core protein. As to quaternary structure, forms a heterodimer with envelope glycoprotein E2. Interacts with mature core protein. Interacts with protease NS2. The heterodimer E1/E2 interacts with host CLDN1; this interaction plays a role in viral entry into host cell. Interacts with host SPSB2 (via C-terminus). Part of the viral assembly initiation complex composed of NS2, E1, E2, NS3, NS4A, NS5A and the mature core protein. Interacts with human PLSCR1. Interacts with host NEURL3; this interaction prevents E1 binding to glycoprotein E2. In terms of assembly, forms a heterodimer with envelope glycoprotein E1. Interacts with host CD81 and SCARB1 receptors; these interactions play a role in viral entry into host cell. Interacts with host EIF2AK2/PKR; this interaction inhibits EIF2AK2 and probably allows the virus to evade the innate immune response. Interacts with host CD209/DC-SIGN and CLEC4M/DC-SIGNR. Interact with host SPCS1; this interaction is essential for viral particle assembly. Interacts with protease NS2. The heterodimer E1/E2 interacts with host CLDN1; this interaction plays a role in viral entry into host cell. Part of the viral assembly initiation complex composed of NS2, E1, E2, NS3, NS4A, NS5A and the mature core protein. Interacts with host SLC3A2/4F2hc; the interaction may facilitate viral entry into host cell. Interacts with human PLSCR1. Homohexamer. Homoheptamer. Interacts with protease NS2. As to quaternary structure, homodimer. Interacts with host SPCS1; this interaction is essential for viral particle assembly. Interacts with envelope glycoprotein E1. Interacts with envelope glycoprotein E2. Interacts with viroporin p7. Interacts with serine protease/helicase NS3. Part of the replication complex composed of NS2, NS3, NS4A, NS4B, NS5A and the RNA-directed RNA polymerase embedded in an ER-derived membranous web. Part of the viral assembly initiation complex composed of NS2, E1, E2, NS3, NS4A, NS5A and the mature core protein. In terms of assembly, interacts with protease NS2. Interacts with non-structural protein 4A; this interaction stabilizes the folding of NS3 serine protease. NS3-NS4A interaction is essential for NS3 activation and allows membrane anchorage of the latter. NS3/NS4A complex also prevents phosphorylation of host IRF3, thus preventing the establishment of dsRNA induced antiviral state. Interacts with host MAVS; this interaction leads to the cleavage and inhibition of host MAVS. Interacts with host TICAM1; this interaction leads to the cleavage and inhibition of host TICAM1. Interacts with host TANK-binding kinase/TBK1; this interaction results in the inhibition of the association between TBK1 and IRF3, which leads to the inhibition of IRF3 activation. Interacts with host RBM24. Part of the replication complex composed of NS2, NS3, NS4A, NS4B, NS5A and the RNA-directed RNA polymerase embedded in an ER-derived membranous web. Part of the viral assembly initiation complex composed of NS2, E1, E2, NS3, NS4A, NS5A and the mature core protein. Monomer. Homodimer; dimerization is required for RNA-binding. Interacts with the mature core protein. Interacts with host GRB2. Interacts with host BIN1. Interacts with host PIK3R1. Interacts with host SRCAP. Interacts with host FKBP8. Interacts with host VAPB. Interacts with host EIF2AK2/PKR; this interaction leads to disruption of EIF2AK2 dimerization by NS5A and probably allows the virus to evade the innate immune response. Interacts (via N-terminus) with host PACSIN2 (via N-terminus); this interaction attenuates protein kinase C alpha-mediated phosphorylation of PACSIN2 by disrupting the interaction between PACSIN2 and PRKCA. Interacts (via N-terminus) with host SRC kinase (via SH2 domain). Interacts with most Src-family kinases. Interacts with host IFI27 and SKP2; promotes the ubiquitin-mediated proteasomal degradation of NS5A. Interacts (via N-terminus) with non-structural protein 4A. Interacts with non-structural protein 4B. Interacts with RNA-directed RNA polymerase. Part of the replication complex composed of NS2, NS3, NS4A, NS4B, NS5A and the RNA-directed RNA polymerase embedded in an ER-derived membranous web. Interacts with host GPS2. Interacts with host TNFRSF21; this interaction allows the modulation by the virus of JNK, p38 MAPK, STAT3, and Akt signaling pathways in a DR6-dependent manner. Interacts (via N-terminus) with host CIDEB (via N-terminus); this interaction seems to regulate the association of HCV particles with APOE. Interacts with host CHKA/Choline Kinase-alpha; CHKA bridges host PI4KA and NS5A and potentiates NS5A-stimulated PI4KA activity, which then facilitates the targeting of the ternary complex to the ER for viral replication. Interacts with host SPSB2 (via C-terminus); this interaction targets NS5A for ubiquitination and degradation. Part of the viral assembly initiation complex composed of NS2, E1, E2, NS3, NS4A, NS5A and the mature core protein. Zn(2+) serves as cofactor. Requires Mg(2+) as cofactor. Specific enzymatic cleavages in vivo yield mature proteins. The structural proteins, core, E1, E2 and p7 are produced by proteolytic processing by host signal peptidases. The core protein precursor is synthesized as a 23 kDa, which is retained in the ER membrane through the hydrophobic signal peptide. Cleavage by the signal peptidase releases the 21 kDa mature core protein. The cleavage of the core protein precursor occurs between aminoacids 176 and 188 but the exact cleavage site is not known. Some degraded forms of the core protein appear as well during the course of infection. The other proteins (p7, NS2, NS3, NS4A, NS4B, NS5A and NS5B) are cleaved by the viral proteases. Autoprocessing between NS2 and NS3 is mediated by the NS2 cysteine protease catalytic domain and regulated by the NS3 N-terminal domain. In terms of processing, phosphorylated by host PKC and PKA. Post-translationally, ubiquitinated; mediated by UBE3A and leading to core protein subsequent proteasomal degradation. Highly N-glycosylated. In terms of processing, palmitoylation is required for NS2/3 autoprocessing and E2 recruitment to membranes. Post-translationally, palmitoylated. This modification may play a role in its polymerization or in protein-protein interactions. Cleaved by host caspases which are probably activated by the viral infection. In terms of processing, ubiquitinated. Ubiquitination, most probably at Lys-2350, mediated by host IFI27 and SKP2 leads to proteasomal degradation, restricting viral infection. Ubiquitination by host TRIM22 leads to interruption of viral replication. Post-translationally, phosphorylated on serines in a basal form termed p56. p58 is a hyperphosphorylated form of p56. p56 and p58 coexist in the cell in roughly equivalent amounts. Hyperphosphorylation is dependent on the presence of NS4A. Host CSNK1A1/CKI-alpha or RPS6KB1 kinases may be responsible for NS5A phosphorylation. Tyrosine phosphorylation is essential for the interaction with host SRC. In terms of processing, the N-terminus is phosphorylated by host PRK2/PKN2.

It localises to the host endoplasmic reticulum membrane. The protein localises to the host mitochondrion membrane. Its subcellular location is the virion. It is found in the host cytoplasm. The protein resides in the host nucleus. It localises to the host lipid droplet. The protein localises to the virion membrane. Its subcellular location is the host mitochondrion. It is found in the host cell membrane. The protein resides in the host perinuclear region. It carries out the reaction Hydrolysis of four peptide bonds in the viral precursor polyprotein, commonly with Asp or Glu in the P6 position, Cys or Thr in P1 and Ser or Ala in P1'.. The enzyme catalyses a ribonucleoside 5'-triphosphate + H2O = a ribonucleoside 5'-diphosphate + phosphate + H(+). The catalysed reaction is ATP + H2O = ADP + phosphate + H(+). It catalyses the reaction RNA(n) + a ribonucleoside 5'-triphosphate = RNA(n+1) + diphosphate. With respect to regulation, inhibited by the antiviral drug hexamethylene amiloride. Inhibition by amantadine appears to be genotype-dependent. Also inhibited by long-alkyl-chain iminosugar derivatives. Its activity is regulated as follows. Activity is up-regulated by PRK2/PKN2-mediated phosphorylation. Its function is as follows. Packages viral RNA to form a viral nucleocapsid, and promotes virion budding. Participates in the viral particle production as a result of its interaction with the non-structural protein 5A. Binds RNA and may function as a RNA chaperone to induce the RNA structural rearrangements taking place during virus replication. Modulates viral translation initiation by interacting with viral IRES and 40S ribosomal subunit. Affects various cell signaling pathways, host immunity and lipid metabolism. Prevents the establishment of cellular antiviral state by blocking the interferon-alpha/beta (IFN-alpha/beta) and IFN-gamma signaling pathways and by blocking the formation of phosphorylated STAT1 and promoting ubiquitin-mediated proteasome-dependent degradation of STAT1. Activates STAT3 leading to cellular transformation. Regulates the activity of cellular genes, including c-myc and c-fos. May repress the promoter of p53, and sequester CREB3 and SP110 isoform 3/Sp110b in the cytoplasm. Represses cell cycle negative regulating factor CDKN1A, thereby interrupting an important check point of normal cell cycle regulation. Targets transcription factors involved in the regulation of inflammatory responses and in the immune response: suppresses NF-kappa-B activation, and activates AP-1. Binds to dendritic cells (DCs) via C1QR1, resulting in down-regulation of T-lymphocytes proliferation. Alters lipid metabolism by interacting with hepatocellular proteins involved in lipid accumulation and storage. Induces up-regulation of FAS promoter activity, and thereby contributes to the increased triglyceride accumulation in hepatocytes (steatosis). In terms of biological role, forms a heterodimer with envelope glycoprotein E2, which mediates virus attachment to the host cell, virion internalization through clathrin-dependent endocytosis and fusion with host membrane. Fusion with the host cell is most likely mediated by both E1 and E2, through conformational rearrangements of the heterodimer required for fusion rather than a classical class II fusion mechanism. E1/E2 heterodimer binds host apolipoproteins such as APOB and APOE thereby forming a lipo-viro-particle (LVP). APOE associated to the LVP allows the initial virus attachment to cell surface receptors such as the heparan sulfate proteoglycans (HSPGs), syndecan-1 (SDC1), syndecan-1 (SDC2), the low-density lipoprotein receptor (LDLR) and scavenger receptor class B type I (SCARB1). The cholesterol transfer activity of SCARB1 allows E2 exposure and binding of E2 to SCARB1 and the tetraspanin CD81. E1/E2 heterodimer binding on CD81 activates the epithelial growth factor receptor (EGFR) signaling pathway. Diffusion of the complex E1-E2-EGFR-SCARB1-CD81 to the cell lateral membrane allows further interaction with Claudin 1 (CLDN1) and occludin (OCLN) to finally trigger HCV entry. Functionally, forms a heterodimer with envelope glycoprotein E1, which mediates virus attachment to the host cell, virion internalization through clathrin-dependent endocytosis and fusion with host membrane. Fusion with the host cell is most likely mediated by both E1 and E2, through conformational rearrangements of the heterodimer required for fusion rather than a classical class II fusion mechanism. The interaction between envelope glycoprotein E2 and host apolipoprotein E/APOE allows the proper assembly, maturation and infectivity of the viral particles. This interaction is probably promoted via the up-regulation of cellular autophagy by the virus. E1/E2 heterodimer binds host apolipoproteins such as APOB and APOE thereby forming a lipo-viro-particle (LVP). APOE associated to the LVP allows the initial virus attachment to cell surface receptors such as the heparan sulfate proteoglycans (HSPGs), syndecan-1 (SDC1), syndecan-1 (SDC2), the low-density lipoprotein receptor (LDLR) and scavenger receptor class B type I (SCARB1). The cholesterol transfer activity of SCARB1 allows E2 exposure and binding of E2 to SCARB1 and the tetraspanin CD81. E1/E2 heterodimer binding on CD81 activates the epithelial growth factor receptor (EGFR) signaling pathway. Diffusion of the complex E1-E2-EGFR-SCARB1-CD81 to the cell lateral membrane allows further interaction with Claudin 1 (CLDN1) and occludin (OCLN) to finally trigger HCV entry. Inhibits host EIF2AK2/PKR activation, preventing the establishment of an antiviral state. Viral ligand for CD209/DC-SIGN and CLEC4M/DC-SIGNR, which are respectively found on dendritic cells (DCs), and on liver sinusoidal endothelial cells and macrophage-like cells of lymph node sinuses. These interactions allow the capture of circulating HCV particles by these cells and subsequent facilitated transmission to permissive cells such as hepatocytes and lymphocyte subpopulations. The interaction between E2 and host amino acid transporter complex formed by SLC3A2 and SLC7A5/LAT1 may facilitate viral entry into host cell. Ion channel protein that acts as a viroporin and plays an essential role in the assembly, envelopment and secretion of viral particles. Regulates the host cell secretory pathway, which induces the intracellular retention of viral glycoproteins and favors assembly of viral particles. Creates a pore in acidic organelles and releases Ca(2+) and H(+) in the cytoplasm of infected cells, leading to a productive viral infection. High levels of cytoplasmic Ca(2+) may trigger membrane trafficking and transport of viral ER-associated proteins to viroplasms, sites of viral genome replication. This ionic imbalance induces the assembly of the inflammasome complex, which triggers the maturation of pro-IL-1beta into IL-1beta through the action of caspase-1. Targets also host mitochondria and induces mitochondrial depolarization. In addition of its role as a viroporin, acts as a lipid raft adhesion factor. Its function is as follows. Cysteine protease required for the proteolytic auto-cleavage between the non-structural proteins NS2 and NS3. The N-terminus of NS3 is required for the function of NS2 protease (active region NS2-3). Promotes the initiation of viral particle assembly by mediating the interaction between structural and non-structural proteins. In terms of biological role, displays three enzymatic activities: serine protease with a chymotrypsin-like fold, NTPase and RNA helicase. NS3 serine protease, in association with NS4A, is responsible for the cleavages of NS3-NS4A, NS4A-NS4B, NS4B-NS5A and NS5A-NS5B. The NS3/NS4A complex prevents phosphorylation of host IRF3, thus preventing the establishment of dsRNA induced antiviral state. The NS3/NS4A complex induces host amino acid transporter component SLC3A2, thus contributing to HCV propagation. NS3 RNA helicase binds to RNA and unwinds both dsDNA and dsRNA in the 3' to 5' direction, and likely resolves RNA complicated stable secondary structures in the template strand. Binds a single ATP and catalyzes the unzipping of a single base pair of dsRNA. Inhibits host antiviral proteins TBK1 and IRF3 thereby preventing the establishment of an antiviral state. Cleaves host MAVS/CARDIF thereby preventing the establishment of an antiviral state. Cleaves host TICAM1/TRIF, thereby disrupting TLR3 signaling and preventing the establishment of an antiviral state. Functionally, peptide cofactor which forms a non-covalent complex with the N-terminal of NS3 serine protease. The NS3/NS4A complex prevents phosphorylation of host IRF3, thus preventing the establishment of dsRNA induced antiviral state. The NS3/NS4A complex induces host amino acid transporter component SLC3A2, thus contributing to HCV propagation. Induces a specific membrane alteration that serves as a scaffold for the virus replication complex. This membrane alteration gives rise to the so-called ER-derived membranous web that contains the replication complex. NS4B self-interaction contributes to its function in membranous web formation. Promotes host TRIF protein degradation in a CASP8-dependent manner thereby inhibiting host TLR3-mediated interferon signaling. Disrupts the interaction between STING and TBK1 contributing to the inhibition of interferon signaling. Its function is as follows. Phosphorylated protein that is indispensable for viral replication and assembly. Both hypo- and hyperphosphorylated states are required for the viral life cycle. The hyperphosphorylated form of NS5A is an inhibitor of viral replication. Involved in RNA-binding and especially in binding to the viral genome. Zinc is essential for RNA-binding. Participates in the viral particle production as a result of its interaction with the viral mature core protein. Its interaction with host VAPB may target the viral replication complex to vesicles. Down-regulates viral IRES translation initiation. Mediates interferon resistance, presumably by interacting with and inhibiting host EIF2AK2/PKR. Prevents BIN1-induced apoptosis. Acts as a transcriptional activator of some host genes important for viral replication when localized in the nucleus. Via the interaction with host PACSIN2, modulates lipid droplet formation in order to promote virion assembly. Modulates TNFRSF21/DR6 signaling pathway for viral propagation. In terms of biological role, RNA-dependent RNA polymerase that performs primer-template recognition and RNA synthesis during viral replication. Initiates RNA transcription/replication at a flavin adenine dinucleotide (FAD), resulting in a 5'- FAD cap on viral RNAs. In this way, recognition of viral 5' RNA by host pattern recognition receptors can be bypassed, thereby evading activation of antiviral pathways. The sequence is that of Genome polyprotein from Hepatitis C virus genotype 1b (isolate Con1) (HCV).